The chain runs to 82 residues: uncharacterized protein (82 aa).

2 helical membrane passes run 29-49 (LMNA…GIII) and 55-75 (WSLP…LTFF).

It is found in the cell membrane. This is an uncharacterized protein from Escherichia coli (strain K12).